We begin with the raw amino-acid sequence, 136 residues long: DNA-directed RNA polymerase subunit omega (136 aa).

Residues 79–107 (EPEAETVPLLSSSPAAAAVAPQSSSDDAA) form a disordered region. A compositionally biased stretch (low complexity) spans 89–107 (SSSPAAAAVAPQSSSDDAA).

Belongs to the RNA polymerase subunit omega family. In terms of assembly, the RNAP catalytic core consists of 2 alpha, 1 beta, 1 beta' and 1 omega subunit. When a sigma factor is associated with the core the holoenzyme is formed, which can initiate transcription.

The catalysed reaction is RNA(n) + a ribonucleoside 5'-triphosphate = RNA(n+1) + diphosphate. Promotes RNA polymerase assembly. Latches the N- and C-terminal regions of the beta' subunit thereby facilitating its interaction with the beta and alpha subunits. The chain is DNA-directed RNA polymerase subunit omega from Methylobacterium radiotolerans (strain ATCC 27329 / DSM 1819 / JCM 2831 / NBRC 15690 / NCIMB 10815 / 0-1).